A 281-amino-acid chain; its full sequence is Protoheme IX farnesyltransferase (281 aa).

9 helical membrane passes run 13–33 (VIWLLVLSALVGYIAAAGPLV), 38–58 (LIELTVVGFLSTGGSAAFNMY), 85–105 (ALTFSIAVSLSGFTLSYLWLG), 107–127 (WVTLMIALGWFFYAVLYTIML), 132–152 (WLNIVIGGFAGNAALLSGWIM), 161–181 (ILLSMVIYVWIPAHIWSLAYY), 206–226 (IISILNLVSIIYMLVLYQLYM), 227–247 (AKLIGYILVIPATLAGIIVTI), and 261–281 (MFKATSPILLLFLLAVIISRI).

This sequence belongs to the UbiA prenyltransferase family. Protoheme IX farnesyltransferase subfamily.

It localises to the cell membrane. The enzyme catalyses heme b + (2E,6E)-farnesyl diphosphate + H2O = Fe(II)-heme o + diphosphate. It functions in the pathway porphyrin-containing compound metabolism; heme O biosynthesis; heme O from protoheme: step 1/1. In terms of biological role, converts heme B (protoheme IX) to heme O by substitution of the vinyl group on carbon 2 of heme B porphyrin ring with a hydroxyethyl farnesyl side group. The chain is Protoheme IX farnesyltransferase from Caldivirga maquilingensis (strain ATCC 700844 / DSM 13496 / JCM 10307 / IC-167).